The sequence spans 208 residues: Uracil phosphoribosyltransferase (208 aa).

5-phospho-alpha-D-ribose 1-diphosphate-binding positions include Arg-78, Arg-103, and Asp-130 to Ser-138. Residues Ile-193 and Gly-198–Ala-200 each bind uracil. Residue Asp-199 coordinates 5-phospho-alpha-D-ribose 1-diphosphate.

This sequence belongs to the UPRTase family. Mg(2+) serves as cofactor.

It catalyses the reaction UMP + diphosphate = 5-phospho-alpha-D-ribose 1-diphosphate + uracil. It participates in pyrimidine metabolism; UMP biosynthesis via salvage pathway; UMP from uracil: step 1/1. Allosterically activated by GTP. Functionally, catalyzes the conversion of uracil and 5-phospho-alpha-D-ribose 1-diphosphate (PRPP) to UMP and diphosphate. The protein is Uracil phosphoribosyltransferase of Escherichia coli O139:H28 (strain E24377A / ETEC).